Reading from the N-terminus, the 233-residue chain is 2,3,4,5-tetrahydropyridine-2,6-dicarboxylate N-acetyltransferase (233 aa).

It belongs to the transferase hexapeptide repeat family. DapH subfamily.

The enzyme catalyses (S)-2,3,4,5-tetrahydrodipicolinate + acetyl-CoA + H2O = L-2-acetamido-6-oxoheptanedioate + CoA. It functions in the pathway amino-acid biosynthesis; L-lysine biosynthesis via DAP pathway; LL-2,6-diaminopimelate from (S)-tetrahydrodipicolinate (acetylase route): step 1/3. Its function is as follows. Catalyzes the transfer of an acetyl group from acetyl-CoA to tetrahydrodipicolinate. The protein is 2,3,4,5-tetrahydropyridine-2,6-dicarboxylate N-acetyltransferase of Thermosipho africanus (strain TCF52B).